Reading from the N-terminus, the 189-residue chain is Protein jagunal homolog (189 aa).

Residues 1 to 34 (MSSRGVRAAGTDGTDFQNRQRVAQHYQESAQYKS) are Cytoplasmic-facing. Residues 35–55 (ILKWFFVPHFLILVFMWLKVG) traverse the membrane as a helical segment. Residues 56–78 (SELLRTNFGWKNAFFDRLDMPSA) lie on the Lumenal side of the membrane. A helical membrane pass occupies residues 79–99 (YPWEYVWCFSFIPIVLAIYSF). The Cytoplasmic portion of the chain corresponds to 100 to 105 (QRNKLK). Residues 106–126 (ILHYAYYAEFVVGIFPCMIGL) form a helical membrane-spanning segment. At 127–150 (GGQLPELMEYAQDMEGSNTPTFKG) the chain is on the lumenal side. A helical transmembrane segment spans residues 151–171 (IFPMVIIWYIFFAVALQIHGF). At 172–189 (SMYFMHHLAAAWAPVKRD) the chain is on the cytoplasmic side.

This sequence belongs to the jagunal family.

It localises to the endoplasmic reticulum membrane. The sequence is that of Protein jagunal homolog from Caenorhabditis elegans.